The sequence spans 394 residues: Elongation factor Tu (394 aa).

The region spanning 10–204 is the tr-type G domain; that stretch reads KPHVNVGTIG…AVDEWIPTPT (195 aa). The segment at 19–26 is G1; that stretch reads GHIDHGKT. 19–26 lines the GTP pocket; the sequence is GHIDHGKT. T26 lines the Mg(2+) pocket. Positions 60–64 are G2; that stretch reads GITIN. The G3 stretch occupies residues 81-84; it reads DCPG. Residues 81–85 and 136–139 contribute to the GTP site; these read DCPGH and NKCD. The G4 stretch occupies residues 136 to 139; it reads NKCD. A G5 region spans residues 174 to 176; the sequence is SAL.

This sequence belongs to the TRAFAC class translation factor GTPase superfamily. Classic translation factor GTPase family. EF-Tu/EF-1A subfamily. As to quaternary structure, monomer.

The protein resides in the cytoplasm. It catalyses the reaction GTP + H2O = GDP + phosphate + H(+). Functionally, GTP hydrolase that promotes the GTP-dependent binding of aminoacyl-tRNA to the A-site of ribosomes during protein biosynthesis. This chain is Elongation factor Tu, found in Mycoplasma genitalium (strain ATCC 33530 / DSM 19775 / NCTC 10195 / G37) (Mycoplasmoides genitalium).